Consider the following 274-residue polypeptide: Penicillin-insensitive murein endopeptidase (274 aa).

The first 19 residues, 1-19 (MKNTVIALLALLASAGSLA), serve as a signal peptide directing secretion. Intrachain disulfides connect Cys-44-Cys-265, Cys-187-Cys-235, and Cys-216-Cys-223. Residues His-110, His-113, Asp-120, Asp-147, His-150, and His-211 each contribute to the Zn(2+) site. The interval 224-263 (EDQAPPPPGDGCGAELQSWFEPPKPGSTPPVKKTPPPLPP) is disordered. The segment covering 245 to 263 (PPKPGSTPPVKKTPPPLPP) has biased composition (pro residues).

It belongs to the peptidase M74 family. As to quaternary structure, dimer. It depends on Zn(2+) as a cofactor.

It is found in the periplasm. In terms of biological role, murein endopeptidase that cleaves the D-alanyl-meso-2,6-diamino-pimelyl amide bond that connects peptidoglycan strands. Likely plays a role in the removal of murein from the sacculus. This Klebsiella pneumoniae (strain 342) protein is Penicillin-insensitive murein endopeptidase.